The sequence spans 723 residues: Bifunctional lysine-specific demethylase and histidyl-hydroxylase NO66 (723 aa).

2 disordered regions span residues 13–34 (KKTA…QKAA) and 48–213 (SAVK…APSC). A compositionally biased stretch (basic residues) spans 14 to 31 (KTAKKPAKKTTKQNRQKQ). Residues 49–72 (AVKQNNGAKGKAKANGVKGNAKAQ) show a composition bias toward low complexity. Acidic residues-rich tracts occupy residues 88–106 (ESVD…EDNE) and 114–129 (EDDY…EFEE). The span at 133-155 (NSPSGSCSCSASSGSSNTENSPP) shows a compositional bias: low complexity. Over residues 190-199 (EQKEGKELSK) the composition is skewed to basic and acidic residues. The span at 204-213 (KSAPAAAPSC) shows a compositional bias: low complexity. One can recognise a JmjC domain in the interval 379 to 518 (NPSTYLKGLR…NLMEALMPAV (140 aa)). Fe cation is bound by residues H419, D421, and H484.

It belongs to the ROX family. NO66 subfamily. Requires Fe(2+) as cofactor.

Its subcellular location is the nucleus. The enzyme catalyses N(6),N(6)-dimethyl-L-lysyl(36)-[histone H3] + 2 2-oxoglutarate + 2 O2 = L-lysyl(36)-[histone H3] + 2 formaldehyde + 2 succinate + 2 CO2. Functionally, oxygenase that can act as both a histone lysine demethylase and a ribosomal histidine hydroxylase. Specifically demethylates 'Lys-4' (H3K4me) and 'Lys-36' (H3K36me) of histone H3, thereby playing a central role in histone code. In Drosophila grimshawi (Hawaiian fruit fly), this protein is Bifunctional lysine-specific demethylase and histidyl-hydroxylase NO66.